The sequence spans 257 residues: Galactitol 2-dehydrogenase (257 aa).

Residues 21 to 23 (RAI), 67 to 68 (DV), Asn94, Tyr162, and Lys166 contribute to the NAD(+) site. The active-site Proton acceptor is the Tyr162.

The protein belongs to the short-chain dehydrogenases/reductases (SDR) family. As to quaternary structure, homotetramer. Mg(2+) serves as cofactor.

The enzyme catalyses galactitol + NAD(+) = keto-D-tagatose + NADH + H(+). Its function is as follows. Catalyzes the oxidation of galactitol to D-tagatose. Also catalyzes the oxidation of a wide range of substrates, including polyvalent aliphatic alcohols and polyols, to the corresponding ketones and ketoses. Galactitol is the preferred substrate. The polypeptide is Galactitol 2-dehydrogenase (Rhizobium johnstonii (strain DSM 114642 / LMG 32736 / 3841) (Rhizobium leguminosarum bv. viciae)).